We begin with the raw amino-acid sequence, 559 residues long: NXPE family member 3 (559 aa).

A signal peptide spans 1–30 (MWTNFFKLRLFCCLLAVLMVVVLVVNVTQV). N-linked (GlcNAc...) asparagine glycans are attached at residues Asn-26, Asn-237, and Asn-346.

It belongs to the NXPE family.

It is found in the secreted. In Pongo abelii (Sumatran orangutan), this protein is NXPE family member 3 (NXPE3).